The sequence spans 247 residues: Cytochrome c oxidase subunit 2 (247 aa).

At 12-38 the chain is on the mitochondrial intermembrane side; the sequence is DVPTPWGLYFQDSSTPNQEGIIELHDN. The helical transmembrane segment at 39–59 threads the bilayer; sequence IMFYLVLILCTVSWLLFSIVK. The Mitochondrial matrix segment spans residues 60-78; it reads DSSKNPLPHKYLVHGQTIE. A helical transmembrane segment spans residues 79–101; that stretch reads IIWTILPAVVLLIIAFPSFILLY. Residues 102 to 247 lie on the Mitochondrial intermembrane side of the membrane; it reads LCDEVISPAM…KEFLTWLNEQ (146 aa). Positions 182, 217, 219, 221, 225, and 228 each coordinate Cu cation. Glu219 serves as a coordination point for Mg(2+).

It belongs to the cytochrome c oxidase subunit 2 family. As to quaternary structure, component of the cytochrome c oxidase (complex IV, CIV), a multisubunit enzyme composed of a catalytic core of 3 subunits and several supernumerary subunits. The complex exists as a monomer or a dimer and forms supercomplexes (SCs) in the inner mitochondrial membrane with ubiquinol-cytochrome c oxidoreductase (cytochrome b-c1 complex, complex III, CIII). It depends on Cu cation as a cofactor. The signal sequence of COX2 is processed by IMP1.

The protein resides in the mitochondrion inner membrane. It catalyses the reaction 4 Fe(II)-[cytochrome c] + O2 + 8 H(+)(in) = 4 Fe(III)-[cytochrome c] + 2 H2O + 4 H(+)(out). In terms of biological role, component of the cytochrome c oxidase, the last enzyme in the mitochondrial electron transport chain which drives oxidative phosphorylation. The respiratory chain contains 3 multisubunit complexes succinate dehydrogenase (complex II, CII), ubiquinol-cytochrome c oxidoreductase (cytochrome b-c1 complex, complex III, CIII) and cytochrome c oxidase (complex IV, CIV), that cooperate to transfer electrons derived from NADH and succinate to molecular oxygen, creating an electrochemical gradient over the inner membrane that drives transmembrane transport and the ATP synthase. Cytochrome c oxidase is the component of the respiratory chain that catalyzes the reduction of oxygen to water. Electrons originating from reduced cytochrome c in the intermembrane space (IMS) are transferred via the dinuclear copper A center (CU(A)) of subunit 2 and heme A of subunit 1 to the active site in subunit 1, a binuclear center (BNC) formed by heme A3 and copper B (CU(B)). The BNC reduces molecular oxygen to 2 water molecules using 4 electrons from cytochrome c in the IMS and 4 protons from the mitochondrial matrix. This Cyberlindnera mrakii (Yeast) protein is Cytochrome c oxidase subunit 2 (COX2).